The following is a 283-amino-acid chain: uncharacterized protein (283 aa).

The span at 1–10 (MEVNKTTESL) shows a compositional bias: polar residues. Disordered stretches follow at residues 1–96 (MEVN…SGGN) and 255–283 (DQEGDQEGEGRQEQHQGRQQEKKLEEAQI). Basic and acidic residues-rich tracts occupy residues 14-34 (KVEHNHAQAESHEPRDQRDVK) and 44-81 (SKQEKLDHGSGRTSSRHETSRSSKEGSIEDKSAEVSSR).

Belongs to the chlamydial CPn_0705/CT_671/TC_0042 family.

This is an uncharacterized protein from Chlamydia muridarum (strain MoPn / Nigg).